A 1184-amino-acid chain; its full sequence is Nucleolar protein 6 (1184 aa).

Over residues 1–10 (MGRIKEKESK) the composition is skewed to basic and acidic residues. Disordered stretches follow at residues 1–42 (MGRI…NRVP) and 1133–1184 (REQR…NALC).

It belongs to the NRAP family. Part of the small subunit (SSU) processome, composed of more than 70 proteins and the RNA chaperone small nucleolar RNA (snoRNA) U3.

The protein resides in the nucleus. Its subcellular location is the nucleolus. It localises to the chromosome. Part of the small subunit (SSU) processome, first precursor of the small eukaryotic ribosomal subunit. During the assembly of the SSU processome in the nucleolus, many ribosome biogenesis factors, an RNA chaperone and ribosomal proteins associate with the nascent pre-rRNA and work in concert to generate RNA folding, modifications, rearrangements and cleavage as well as targeted degradation of pre-ribosomal RNA by the RNA exosome. The polypeptide is Nucleolar protein 6 (Drosophila virilis (Fruit fly)).